A 224-amino-acid chain; its full sequence is UPF0758 protein PST_0473 (224 aa).

In terms of domain architecture, MPN spans 102-224 (ALESPQAVRD…PLSMAEYGWM (123 aa)). Zn(2+) is bound by residues His-173, His-175, and Asp-186. The JAMM motif signature appears at 173–186 (HNHPSGVAEPSQAD).

The protein belongs to the UPF0758 family.

The protein is UPF0758 protein PST_0473 of Stutzerimonas stutzeri (strain A1501) (Pseudomonas stutzeri).